Consider the following 360-residue polypeptide: Peptide chain release factor 1 (360 aa).

Glutamine 235 is subject to N5-methylglutamine. Basic and acidic residues predominate over residues 284-293 (QRRQQEESST). The tract at residues 284 to 311 (QRRQQEESSTRRNLLGSGDRSDRIRTYN) is disordered.

It belongs to the prokaryotic/mitochondrial release factor family. Methylated by PrmC. Methylation increases the termination efficiency of RF1.

The protein resides in the cytoplasm. In terms of biological role, peptide chain release factor 1 directs the termination of translation in response to the peptide chain termination codons UAG and UAA. In Sodalis glossinidius (strain morsitans), this protein is Peptide chain release factor 1.